We begin with the raw amino-acid sequence, 261 residues long: MIRDKSAKRPAKDAPKKAAVKEAAPVKASFRRERALIKRGIWPVAGCDEAGRGPLAGPVVAAAVILDPDRIPRGIDDSKRLTAEQREKLFDKICATAQVSVAVASPARIDRDNILRASLWALKRAVVALPEAPRHVFVDGRDRLDTACDCEAVIGGDGIVLSIAAASIVAKVTRDRLMCALAQDCPGYGFEQHKGYGVPEHLDALNRLGPTVHHRSFFAPVAAARAKHMPWTVEPVRDLFAATEVEVQLEASVEIDASANL.

A compositionally biased stretch (basic and acidic residues) spans 1-20 (MIRDKSAKRPAKDAPKKAAV). The segment at 1-23 (MIRDKSAKRPAKDAPKKAAVKEA) is disordered. Residues 42–230 (WPVAGCDEAG…VAAARAKHMP (189 aa)) form the RNase H type-2 domain. 3 residues coordinate a divalent metal cation: Asp48, Glu49, and Asp139.

This sequence belongs to the RNase HII family. Mn(2+) is required as a cofactor. Requires Mg(2+) as cofactor.

It localises to the cytoplasm. The enzyme catalyses Endonucleolytic cleavage to 5'-phosphomonoester.. Its function is as follows. Endonuclease that specifically degrades the RNA of RNA-DNA hybrids. This Bradyrhizobium diazoefficiens (strain JCM 10833 / BCRC 13528 / IAM 13628 / NBRC 14792 / USDA 110) protein is Ribonuclease HII.